Reading from the N-terminus, the 375-residue chain is uncharacterized protein (375 aa).

The N-terminal stretch at 1-20 is a signal peptide; the sequence is MKNKLFIILIIFIILKIVIC. Residues 21 to 335 are Extracellular-facing; that stretch reads QNTTPSKLIP…EKQVERKITP (315 aa). Residues 30-42 are compositionally biased toward low complexity; it reads PQQQQKQKQQQTQ. Disordered regions lie at residues 30–74 and 113–253; these read PQQQ…QPQQ and SQNV…PHNH. The segment covering 43–53 has biased composition (basic residues); that stretch reads PHHHHHHHQQH. Residues 54 to 74 are compositionally biased toward low complexity; it reads QQHQQQHQPNQQIKQQQQPQQ. A compositionally biased stretch (basic residues) spans 120 to 151; it reads PPHHTQQRVPHHHGPNGAPHHHGPNGAPHHHG. The span at 168–180 shows a compositional bias: polar residues; that stretch reads GHNTQGHVQTNHV. Residues 181–220 are compositionally biased toward low complexity; that stretch reads NNINKNNINNNNNNNNNNNNNNNNNNNNNINDNKNIRNNI. Residues 336 to 356 traverse the membrane as a helical segment; that stretch reads IMVLYILLASTMVIQLFIMVF. Residues 357-375 lie on the Cytoplasmic side of the membrane; that stretch reads KQVKHIREINAKTTMESLL.

It localises to the membrane. This is an uncharacterized protein from Dictyostelium discoideum (Social amoeba).